A 306-amino-acid polypeptide reads, in one-letter code: Phosphatidate cytidylyltransferase (306 aa).

A disordered region spans residues 1–28; the sequence is MTTNDAGTGNPAEQPARGAKQQPATETS. A run of 8 helical transmembrane segments spans residues 36-56, 82-102, 103-123, 151-171, 180-200, 218-238, 241-261, and 285-305; these read AAIV…VFVP, GYLI…WLTW, PFGA…CMIW, ATVF…MLVY, FCMM…GVLF, FAGS…FLVG, PWIG…GDLV, and MDRL…LTLL.

This sequence belongs to the CDS family.

It localises to the cell membrane. It carries out the reaction a 1,2-diacyl-sn-glycero-3-phosphate + CTP + H(+) = a CDP-1,2-diacyl-sn-glycerol + diphosphate. Its pathway is phospholipid metabolism; CDP-diacylglycerol biosynthesis; CDP-diacylglycerol from sn-glycerol 3-phosphate: step 3/3. The sequence is that of Phosphatidate cytidylyltransferase (cdsA) from Mycobacterium bovis (strain ATCC BAA-935 / AF2122/97).